Consider the following 241-residue polypeptide: Phosphoadenosine 5'-phosphosulfate reductase (241 aa).

Residues G221–A241 are disordered. Residue C237 is the Nucleophile; cysteine thiosulfonate intermediate of the active site.

The protein belongs to the PAPS reductase family. CysH subfamily.

The protein resides in the cytoplasm. The enzyme catalyses [thioredoxin]-disulfide + sulfite + adenosine 3',5'-bisphosphate + 2 H(+) = [thioredoxin]-dithiol + 3'-phosphoadenylyl sulfate. It functions in the pathway sulfur metabolism; hydrogen sulfide biosynthesis; sulfite from sulfate: step 3/3. In terms of biological role, catalyzes the formation of sulfite from phosphoadenosine 5'-phosphosulfate (PAPS) using thioredoxin as an electron donor. The protein is Phosphoadenosine 5'-phosphosulfate reductase of Gloeobacter violaceus (strain ATCC 29082 / PCC 7421).